A 347-amino-acid polypeptide reads, in one-letter code: GMP reductase (347 aa).

Residue 108–131 (ADFEKTQQILSQNPQLNFVCIDVA) coordinates NADP(+). K(+) is bound by residues Gly-181 and Gly-183. Cys-186 functions as the Thioimidate intermediate in the catalytic mechanism. Residue 216–239 (IISDGGCTMPGDVAKAFGGGADFV) coordinates NADP(+).

It belongs to the IMPDH/GMPR family. GuaC type 1 subfamily. In terms of assembly, homotetramer.

It carries out the reaction IMP + NH4(+) + NADP(+) = GMP + NADPH + 2 H(+). Functionally, catalyzes the irreversible NADPH-dependent deamination of GMP to IMP. It functions in the conversion of nucleobase, nucleoside and nucleotide derivatives of G to A nucleotides, and in maintaining the intracellular balance of A and G nucleotides. In Klebsiella pneumoniae subsp. pneumoniae (strain ATCC 700721 / MGH 78578), this protein is GMP reductase.